The chain runs to 106 residues: Nucleoid-associated protein BRADO0764 (106 aa).

It belongs to the YbaB/EbfC family. In terms of assembly, homodimer.

Its subcellular location is the cytoplasm. It is found in the nucleoid. Its function is as follows. Binds to DNA and alters its conformation. May be involved in regulation of gene expression, nucleoid organization and DNA protection. In Bradyrhizobium sp. (strain ORS 278), this protein is Nucleoid-associated protein BRADO0764.